A 621-amino-acid chain; its full sequence is Kininogen-1 (621 aa).

The signal sequence occupies residues 1-18 (MKLITILFLCSRLLPSLT). Residues 27–131 (CNDQDVFKAV…IQTCLITPAE (105 aa)) enclose the Cystatin kininogen-type 1 domain. 9 disulfide bridges follow: cysteine 27/cysteine 591, cysteine 82/cysteine 93, cysteine 106/cysteine 125, cysteine 141/cysteine 144, cysteine 205/cysteine 217, cysteine 228/cysteine 247, cysteine 263/cysteine 266, cysteine 327/cysteine 339, and cysteine 350/cysteine 369. Asparagine 47 and asparagine 87 each carry an N-linked (GlcNAc...) asparagine glycan. Threonine 136 carries an O-linked (GalNAc...) threonine; partial glycan. One can recognise a Cystatin kininogen-type 2 domain in the interval 150-253 (TKSPDLEPVL…SQKCDLYPVK (104 aa)). N-linked (GlcNAc...) asparagine glycosylation is found at asparagine 168 and asparagine 169. Asparagine 197 is a glycosylation site (N-linked (GlcNAc...) asparagine; partial). Asparagine 204 carries an N-linked (GlcNAc...) asparagine glycan. A Cystatin kininogen-type 3 domain is found at 272-375 (VDSPDLEEPL…TVNCQPLGQT (104 aa)). Serine 331 bears the Phosphoserine mark. Residues 396-497 (EGSTTVSLPH…GKNNGKHYDW (102 aa)) are disordered. Residue serine 398 is glycosylated (O-linked (GalNAc...) serine). O-linked (GalNAc...) threonine glycosylation is found at threonine 399 and threonine 400. Serine 406 is a glycosylation site (O-linked (GalNAc...) serine). Over residues 444 to 492 (GHKHKHDQGHGHHGSHGLGHGHQKQHGLGHGHKHGHGHGKHKNKGKNNG) the composition is skewed to basic residues. Serine 512 carries O-linked (GalNAc...) serine glycosylation. O-linked (GalNAc...) threonine glycosylation is found at threonine 520, threonine 524, threonine 536, threonine 548, threonine 553, and threonine 570. Serine 581 is a glycosylation site (O-linked (GalNAc...) serine).

Bradykinin is released from kininogen by plasma kallikrein. In terms of processing, phosphorylated by FAM20C in the extracellular medium. Post-translationally, bradykinin is inactivated by ACE, which removes the dipeptide Arg-Phe from its C-terminus. As to expression, plasma.

The protein localises to the secreted. Its subcellular location is the extracellular space. Kininogens are inhibitors of thiol proteases. HMW-kininogen plays an important role in blood coagulation by helping to position optimally prekallikrein and factor XI next to factor XII; HMW-kininogen inhibits the thrombin- and plasmin-induced aggregation of thrombocytes. LMW-kininogen inhibits the aggregation of thrombocytes. LMW-kininogen is in contrast to HMW-kininogen not involved in blood clotting. In terms of biological role, the active peptide bradykinin is a potent vasodilatator that is released from HMW-kininogen shows a variety of physiological effects: (A) influence in smooth muscle contraction, (B) induction of hypotension, (C) natriuresis and diuresis, (D) decrease in blood glucose level, (E) it is a mediator of inflammation and causes (E1) increase in vascular permeability, (E2) stimulation of nociceptors (4E3) release of other mediators of inflammation (e.g. prostaglandins), (F) it has a cardioprotective effect (directly via bradykinin action, indirectly via endothelium-derived relaxing factor action). The protein is Kininogen-1 (KNG1) of Bos taurus (Bovine).